Reading from the N-terminus, the 80-residue chain is Acyl carrier protein (80 aa).

The 76-residue stretch at 4-79 folds into the Carrier domain; it reads QEIFEKVKAV…DAVEYIKAKL (76 aa). The residue at position 39 (S39) is an O-(pantetheine 4'-phosphoryl)serine.

The protein belongs to the acyl carrier protein (ACP) family. In terms of processing, 4'-phosphopantetheine is transferred from CoA to a specific serine of apo-ACP by AcpS. This modification is essential for activity because fatty acids are bound in thioester linkage to the sulfhydryl of the prosthetic group.

It is found in the cytoplasm. It functions in the pathway lipid metabolism; fatty acid biosynthesis. In terms of biological role, carrier of the growing fatty acid chain in fatty acid biosynthesis. This Thermus thermophilus (strain ATCC BAA-163 / DSM 7039 / HB27) protein is Acyl carrier protein.